We begin with the raw amino-acid sequence, 288 residues long: Chitinase 5 (288 aa).

A signal peptide spans 1–29 (MANSPTPTMLAFLALGLALLLSATGQASA). Residues 30-64 (QNCGCQSNMCCSKWGYCGTGKDYCGDGCRSGPCYG) enclose the Chitin-binding type-1 domain. Intrachain disulfides connect C32/C40, C34/C46, C39/C53, C57/C62, C107/C156, C169/C178, and C256/C288. The active-site Proton donor is the E151.

It belongs to the glycosyl hydrolase 19 family. Chitinase class IV subfamily. In terms of tissue distribution, expressed in sheaths and meristems and at lower levels in roots and leaves.

The catalysed reaction is Random endo-hydrolysis of N-acetyl-beta-D-glucosaminide (1-&gt;4)-beta-linkages in chitin and chitodextrins.. May function in reproductive organs during embryogenesis and seed maturation. The sequence is that of Chitinase 5 (Cht5) from Oryza sativa subsp. japonica (Rice).